Reading from the N-terminus, the 90-residue chain is uncharacterized protein (90 aa).

This is an uncharacterized protein from Mycobacterium tuberculosis (strain ATCC 25618 / H37Rv).